We begin with the raw amino-acid sequence, 460 residues long: Bifunctional protein GlmU (460 aa).

The interval 1-233 (MLDIVIMAAG…ETEVLGVNSP (233 aa)) is pyrophosphorylase. Residues Lys21, Gln76, and 81–82 (GT) contribute to the UDP-N-acetyl-alpha-D-glucosamine site. Asp105 contacts Mg(2+). Positions 140, 158, and 231 each coordinate UDP-N-acetyl-alpha-D-glucosamine. Asn231 serves as a coordination point for Mg(2+). Residues 234 to 254 (LQLADLERRLQRKQAEALLEA) form a linker region. Residues 255-460 (GVRLADPARF…AGWQRPQKKR (206 aa)) are N-acetyltransferase. Residues Arg337 and Lys355 each contribute to the UDP-N-acetyl-alpha-D-glucosamine site. The active-site Proton acceptor is the His367. Tyr370 and Asn381 together coordinate UDP-N-acetyl-alpha-D-glucosamine. Residues Ala384, 390–391 (NY), Ser409, Gly427, and Arg444 contribute to the acetyl-CoA site.

It in the N-terminal section; belongs to the N-acetylglucosamine-1-phosphate uridyltransferase family. This sequence in the C-terminal section; belongs to the transferase hexapeptide repeat family. Homotrimer. Requires Mg(2+) as cofactor.

The protein localises to the cytoplasm. The catalysed reaction is alpha-D-glucosamine 1-phosphate + acetyl-CoA = N-acetyl-alpha-D-glucosamine 1-phosphate + CoA + H(+). It catalyses the reaction N-acetyl-alpha-D-glucosamine 1-phosphate + UTP + H(+) = UDP-N-acetyl-alpha-D-glucosamine + diphosphate. The protein operates within nucleotide-sugar biosynthesis; UDP-N-acetyl-alpha-D-glucosamine biosynthesis; N-acetyl-alpha-D-glucosamine 1-phosphate from alpha-D-glucosamine 6-phosphate (route II): step 2/2. It functions in the pathway nucleotide-sugar biosynthesis; UDP-N-acetyl-alpha-D-glucosamine biosynthesis; UDP-N-acetyl-alpha-D-glucosamine from N-acetyl-alpha-D-glucosamine 1-phosphate: step 1/1. Its pathway is bacterial outer membrane biogenesis; LPS lipid A biosynthesis. Its function is as follows. Catalyzes the last two sequential reactions in the de novo biosynthetic pathway for UDP-N-acetylglucosamine (UDP-GlcNAc). The C-terminal domain catalyzes the transfer of acetyl group from acetyl coenzyme A to glucosamine-1-phosphate (GlcN-1-P) to produce N-acetylglucosamine-1-phosphate (GlcNAc-1-P), which is converted into UDP-GlcNAc by the transfer of uridine 5-monophosphate (from uridine 5-triphosphate), a reaction catalyzed by the N-terminal domain. The chain is Bifunctional protein GlmU from Methylibium petroleiphilum (strain ATCC BAA-1232 / LMG 22953 / PM1).